The chain runs to 220 residues: Ribosomal RNA large subunit methyltransferase E (220 aa).

Residues Gly60, Trp62, Asp92, Asp108, and Asp133 each contribute to the S-adenosyl-L-methionine site. The active-site Proton acceptor is Lys173.

This sequence belongs to the class I-like SAM-binding methyltransferase superfamily. RNA methyltransferase RlmE family.

It localises to the cytoplasm. It catalyses the reaction uridine(2552) in 23S rRNA + S-adenosyl-L-methionine = 2'-O-methyluridine(2552) in 23S rRNA + S-adenosyl-L-homocysteine + H(+). In terms of biological role, specifically methylates the uridine in position 2552 of 23S rRNA at the 2'-O position of the ribose in the fully assembled 50S ribosomal subunit. This is Ribosomal RNA large subunit methyltransferase E from Burkholderia multivorans (strain ATCC 17616 / 249).